A 548-amino-acid polypeptide reads, in one-letter code: Natural resistance-associated macrophage protein 1 (548 aa).

A disordered region spans residues 1 to 38 (MSGDTGPPKQGGTRYGSISSPPSPEPQQAPPGGTYLSE). Residues 1–55 (MSGDTGPPKQGGTRYGSISSPPSPEPQQAPPGGTYLSEKIPIPDTESGTFSLRKL) lie on the Cytoplasmic side of the membrane. Residues 56–73 (WAFTGPGFLMSIAFLDPG) form a helical membrane-spanning segment. Residues 74-82 (NIESDLQAG) lie on the Extracellular side of the membrane. Residues 83–102 (AVAGFKLLWVLLWATVLGLL) form a helical membrane-spanning segment. At 103–139 (CQRLAARLGVVTGKDLGEVCHLYYPKVPRILLWLTIE) the chain is on the cytoplasmic side. A helical transmembrane segment spans residues 140–160 (LAIVGSDMQEVIGTAIAFSLL). Over 161-164 (SAGR) the chain is Extracellular. Residues 165 to 184 (IPLWGGVLITIVDAFFFLFL) traverse the membrane as a helical segment. Residues 185 to 193 (DNYGLRKLE) are Cytoplasmic-facing. The helical transmembrane segment at 194 to 214 (AFFGFLITIMALTFGYEYVVA) threads the bilayer. The Extracellular segment spans residues 215–237 (QPAQGALLQGLFLPSCPGCGQPE). Residues 238-256 (LLQAVGIIGAIIMPHNIYL) traverse the membrane as a helical segment. Over 257–284 (HSSLVKSREVDRSRRADIREANMYFLIE) the chain is Cytoplasmic. Residues 285 to 304 (ATIALSVSFLINLFVMAVFG) traverse the membrane as a helical segment. At 305–346 (QAFYKQTNQAAFNICANSSLQDYAPIFPRNNLTVAVDIYQGG) the chain is on the extracellular side. Asn-321 and Asn-335 each carry an N-linked (GlcNAc...) asparagine glycan. Residues 347 to 366 (VILGCLFGPAALYIWAVGLL) traverse the membrane as a helical segment. Over 367 to 397 (AAGQSSTMTGTYAGQFVMEGFLKLRWSRFAR) the chain is Cytoplasmic. Residues 398–415 (VLLTRSCAILPTVLLAVF) form a helical membrane-spanning segment. Topologically, residues 416-426 (RDLRDLSGLND) are extracellular. Residues 427–447 (LLNVLQSLLLPFAVLPILTFT) traverse the membrane as a helical segment. Topologically, residues 448-463 (SMPALMREFANGLVSK) are cytoplasmic. Residues 464–485 (VITSSIMVLVCAVNLYFVISYV) form a helical membrane-spanning segment. At 486 to 493 (PSLPHPAY) the chain is on the extracellular side. Residues 494 to 513 (FSLVALLAAAYLGLTTYLVW) traverse the membrane as a helical segment. Residues 514-548 (TCLITQGATLLAHSSHQRFLYGLPEEDQEKGRTSG) lie on the Cytoplasmic side of the membrane.

This sequence belongs to the NRAMP family.

The protein localises to the late endosome membrane. Its subcellular location is the lysosome membrane. The catalysed reaction is Zn(2+)(in) + H(+)(out) = Zn(2+)(out) + H(+)(in). It catalyses the reaction Fe(2+)(in) + H(+)(out) = Fe(2+)(out) + H(+)(in). It carries out the reaction Mn(2+)(in) + H(+)(out) = Mn(2+)(out) + H(+)(in). In terms of biological role, macrophage-specific antiporter that fluxes metal ions in either direction against a proton gradient. Localized to late endosomal lysosomal membranes, delivers bivalent cations from the cytosol into these acidic compartments where they may directly affect antimicrobial activity. Involved in iron metabolism and host natural resistance to infection with intracellular parasites. Pathogen resistance involves sequestration of Fe(2+) and Mn(2+), cofactors of both prokaryotic and eukaryotic catalases and superoxide dismutases, not only to protect the macrophage against its own generation of reactive oxygen species, but to deny the cations to the pathogen for synthesis of its protective enzymes. This chain is Natural resistance-associated macrophage protein 1 (SLC11A1), found in Bison bison (American bison).